Consider the following 225-residue polypeptide: Futalosine hydrolase (225 aa).

This sequence belongs to the PNP/UDP phosphorylase family. Futalosine hydrolase subfamily. Homotetramer.

The catalysed reaction is futalosine + H2O = dehypoxanthine futalosine + hypoxanthine. It functions in the pathway quinol/quinone metabolism; menaquinone biosynthesis. With respect to regulation, no enhancing of inhibitory effects are observed with divalent metal ions. Slightly inhibited by hypoxanthine. In terms of biological role, catalyzes the hydrolysis of futalosine (FL) to dehypoxanthine futalosine (DHFL) and hypoxanthine, a step in the biosynthesis of menaquinone (MK, vitamin K2). Is highly specific to futalosine since it does not accept aminodeoxyfutalosine (AFL), or any structurally related nucleotides and nucleosides as substrate. The sequence is that of Futalosine hydrolase from Thermus thermophilus (strain ATCC 27634 / DSM 579 / HB8).